Consider the following 568-residue polypeptide: 2-succinyl-5-enolpyruvyl-6-hydroxy-3-cyclohexene-1-carboxylate synthase (568 aa).

It belongs to the TPP enzyme family. MenD subfamily. Homodimer. It depends on Mg(2+) as a cofactor. Requires Mn(2+) as cofactor. Thiamine diphosphate is required as a cofactor.

It catalyses the reaction isochorismate + 2-oxoglutarate + H(+) = 5-enolpyruvoyl-6-hydroxy-2-succinyl-cyclohex-3-ene-1-carboxylate + CO2. The protein operates within quinol/quinone metabolism; 1,4-dihydroxy-2-naphthoate biosynthesis; 1,4-dihydroxy-2-naphthoate from chorismate: step 2/7. It participates in quinol/quinone metabolism; menaquinone biosynthesis. Functionally, catalyzes the thiamine diphosphate-dependent decarboxylation of 2-oxoglutarate and the subsequent addition of the resulting succinic semialdehyde-thiamine pyrophosphate anion to isochorismate to yield 2-succinyl-5-enolpyruvyl-6-hydroxy-3-cyclohexene-1-carboxylate (SEPHCHC). The chain is 2-succinyl-5-enolpyruvyl-6-hydroxy-3-cyclohexene-1-carboxylate synthase from Haemophilus influenzae (strain PittEE).